The chain runs to 248 residues: Ureidoacrylate amidohydrolase RutB (248 aa).

The Proton acceptor role is filled by Asp-43. Lys-152 is a catalytic residue. Residue Cys-185 is the Nucleophile of the active site.

It belongs to the isochorismatase family. RutB subfamily.

The enzyme catalyses (Z)-3-ureidoacrylate + H2O + H(+) = (Z)-3-aminoacrylate + NH4(+) + CO2. It catalyses the reaction (Z)-3-ureidoacrylate + H2O = (Z)-3-aminoacrylate + carbamate + H(+). The catalysed reaction is (Z)-2-methylureidoacrylate + H2O + H(+) = (Z)-2-methylaminoacrylate + NH4(+) + CO2. Hydrolyzes ureidoacrylate to form aminoacrylate and carbamate. The carbamate hydrolyzes spontaneously, thereby releasing one of the nitrogen atoms of the pyrimidine ring as ammonia and one of its carbon atoms as CO2. This is Ureidoacrylate amidohydrolase RutB from Serratia proteamaculans (strain 568).